The primary structure comprises 880 residues: Valine--tRNA ligase (880 aa).

A 'HIGH' region motif is present at residues 49–59 (PNVTGKLHLGH). Positions 525-529 (KMSKS) match the 'KMSKS' region motif. Lys528 is a binding site for ATP. Residues 809-879 (LAGLLDLEEE…AVRARIKELK (71 aa)) adopt a coiled-coil conformation.

Belongs to the class-I aminoacyl-tRNA synthetase family. ValS type 1 subfamily. Monomer.

It localises to the cytoplasm. The catalysed reaction is tRNA(Val) + L-valine + ATP = L-valyl-tRNA(Val) + AMP + diphosphate. Catalyzes the attachment of valine to tRNA(Val). As ValRS can inadvertently accommodate and process structurally similar amino acids such as threonine, to avoid such errors, it has a 'posttransfer' editing activity that hydrolyzes mischarged Thr-tRNA(Val) in a tRNA-dependent manner. The chain is Valine--tRNA ligase from Halalkalibacterium halodurans (strain ATCC BAA-125 / DSM 18197 / FERM 7344 / JCM 9153 / C-125) (Bacillus halodurans).